Consider the following 721-residue polypeptide: Ribonucleoside-diphosphate reductase subunit alpha (721 aa).

Substrate-binding positions include Thr-159, 175 to 176 (SC), Gly-204, 384 to 388 (NLCSE), and 589 to 593 (PTGSI). Cys-176 and Cys-413 are joined by a disulfide. The active-site Proton acceptor is the Asn-384. Cys-386 functions as the Cysteine radical intermediate in the catalytic mechanism. The Proton acceptor role is filled by Glu-388.

It belongs to the ribonucleoside diphosphate reductase large chain family. Tetramer of two alpha and two beta subunits.

It carries out the reaction a 2'-deoxyribonucleoside 5'-diphosphate + [thioredoxin]-disulfide + H2O = a ribonucleoside 5'-diphosphate + [thioredoxin]-dithiol. Under complex allosteric control mediated by deoxynucleoside triphosphates and ATP binding. The type of nucleotide bound at the specificity site determines substrate preference. It seems probable that ATP makes the enzyme reduce CDP and UDP, dGTP favors ADP reduction and dTTP favors GDP reduction. Provides the precursors necessary for DNA synthesis. Catalyzes the biosynthesis of deoxyribonucleotides from the corresponding ribonucleotides. This is Ribonucleoside-diphosphate reductase subunit alpha (nrdE) from Mycoplasma genitalium (strain ATCC 33530 / DSM 19775 / NCTC 10195 / G37) (Mycoplasmoides genitalium).